A 332-amino-acid polypeptide reads, in one-letter code: Cilia- and flagella-associated protein 119 (332 aa).

Polar residues predominate over residues methionine 1 to leucine 10. 3 disordered regions span residues methionine 1–phenylalanine 70, glutamate 246–glutamine 271, and arginine 308–lysine 332. The span at valine 14–arginine 30 shows a compositional bias: basic and acidic residues. Positions glutamate 49 to proline 58 are enriched in polar residues. The stretch at leucine 287–arginine 308 forms a coiled coil.

Specifically expressed in testis (at protein level).

Its subcellular location is the cell projection. The protein localises to the cilium. The protein resides in the flagellum. It localises to the cytoplasmic vesicle. It is found in the secretory vesicle. Its subcellular location is the acrosome. The protein localises to the cytoplasm. The sequence is that of Cilia- and flagella-associated protein 119 from Rattus norvegicus (Rat).